The sequence spans 694 residues: Elongation factor G (694 aa).

Residues 8 to 287 (EDYRNFGIMA…AVVEFLPAPT (280 aa)) enclose the tr-type G domain. Residues 17-24 (AHIDAGKT), 86-90 (DTPGH), and 140-143 (NKMD) each bind GTP.

The protein belongs to the TRAFAC class translation factor GTPase superfamily. Classic translation factor GTPase family. EF-G/EF-2 subfamily.

Its subcellular location is the cytoplasm. Catalyzes the GTP-dependent ribosomal translocation step during translation elongation. During this step, the ribosome changes from the pre-translocational (PRE) to the post-translocational (POST) state as the newly formed A-site-bound peptidyl-tRNA and P-site-bound deacylated tRNA move to the P and E sites, respectively. Catalyzes the coordinated movement of the two tRNA molecules, the mRNA and conformational changes in the ribosome. This is Elongation factor G from Brucella anthropi (strain ATCC 49188 / DSM 6882 / CCUG 24695 / JCM 21032 / LMG 3331 / NBRC 15819 / NCTC 12168 / Alc 37) (Ochrobactrum anthropi).